Here is a 122-residue protein sequence, read N- to C-terminus: HLLKFNKMIKFETRKNAIPFYAFYGCYCGWGGRXXXXXXXXXCCFVHDCCYGKXXXXXXXWDLYPYXXXSGYLTCGKGTWCEEQICECDRVAAECLRRSLSTYKYGYMFYPDSRCRGPSETC.

6 cysteine pairs are disulfide-bonded: Cys26–Cys115, Cys28–Cys44, Cys43–Cys95, Cys49–Cys122, Cys50–Cys88, and Cys75–Cys86. The Ca(2+) site is built by Tyr27, Gly29, and Gly31. Residue His47 is part of the active site. Position 48 (Asp48) interacts with Ca(2+). Residue Asp89 is part of the active site.

As to quaternary structure, monomer. Ca(2+) serves as cofactor. Expressed by the venom gland.

Its subcellular location is the secreted. It carries out the reaction a 1,2-diacyl-sn-glycero-3-phosphocholine + H2O = a 1-acyl-sn-glycero-3-phosphocholine + a fatty acid + H(+). Its function is as follows. Snake venom phospholipase A2 (PLA2) that may display neurotoxic and myotoxic activities. May induce inflammatory edema by mechanisms involving mast cell activation and arachidonic acid metabolites. May increase plasma creatine kinase activity. PLA2 catalyzes the calcium-dependent hydrolysis of the 2-acyl groups in 3-sn-phosphoglycerides. The chain is Basic phospholipase A2 LmTX-II from Lachesis muta muta (Bushmaster).